We begin with the raw amino-acid sequence, 156 residues long: RNA pyrophosphohydrolase (156 aa).

The Nudix hydrolase domain maps to Asn6 to Lys148. The short motif at Gly43–Gly64 is the Nudix box element.

Belongs to the Nudix hydrolase family. RppH subfamily. Requires a divalent metal cation as cofactor.

Its function is as follows. Accelerates the degradation of transcripts by removing pyrophosphate from the 5'-end of triphosphorylated RNA, leading to a more labile monophosphorylated state that can stimulate subsequent ribonuclease cleavage. This is RNA pyrophosphohydrolase from Campylobacter jejuni subsp. jejuni serotype O:6 (strain 81116 / NCTC 11828).